The sequence spans 174 residues: Protein C2-DOMAIN ABA-RELATED 6 (174 aa).

One can recognise a C2 domain in the interval 1–115 (MEKTEEEVEM…HKLGLKELPH (115 aa)). Ca(2+) contacts are provided by arginine 30, aspartate 31, aspartate 36, aspartate 82, lysine 83, aspartate 84, and aspartate 90.

It belongs to the plant CAR protein family. Binds to PYR/PYL/RCAR abscisic acid intracellular receptors in an ABA-independent manner, both at the plasma membrane and in the nucleus. Subunit of a complex made of CAR6, PHOT1 and RPT3/NPH3. Interacts directly with RPT3/NPH3.

The protein resides in the cell membrane. It is found in the nucleus. Functionally, stimulates the GTPase/ATPase activities of Obg-like ATPases. Mediates the transient calcium-dependent interaction of PYR/PYL/RCAR abscisic acid (ABA) receptors with the plasma membrane and thus regulates ABA sensitivity. Prevents hypocotyl bending as well as gravitropic response under blue light conditions. This Arabidopsis thaliana (Mouse-ear cress) protein is Protein C2-DOMAIN ABA-RELATED 6.